A 126-amino-acid chain; its full sequence is Large ribosomal subunit protein uL14 (126 aa).

This sequence belongs to the universal ribosomal protein uL14 family. As to quaternary structure, part of the 50S ribosomal subunit. Forms a cluster with proteins L3 and L19. In the 70S ribosome, L14 and L19 interact and together make contacts with the 16S rRNA in bridges B5 and B8.

In terms of biological role, binds to 23S rRNA. Forms part of two intersubunit bridges in the 70S ribosome. The protein is Large ribosomal subunit protein uL14 of Persephonella marina (strain DSM 14350 / EX-H1).